Here is a 336-residue protein sequence, read N- to C-terminus: Holliday junction branch migration complex subunit RuvB (336 aa).

The large ATPase domain (RuvB-L) stretch occupies residues 4–184; the sequence is ADRLIQPQVI…FGIPLRLEFY (181 aa). Residues Arg-24, Gly-65, Lys-68, Thr-69, Thr-70, 131-133, Arg-174, Tyr-184, and Arg-221 each bind ATP; that span reads EDY. Position 69 (Thr-69) interacts with Mg(2+). Residues 185-255 form a small ATPAse domain (RuvB-S) region; it reads NIKDLSTIVI…VAELALDMLD (71 aa). The tract at residues 258 to 336 is head domain (RuvB-H); the sequence is AEGFDYMDRK…HFNLIQPEAK (79 aa). Arg-294, Arg-313, and Arg-318 together coordinate DNA.

The protein belongs to the RuvB family. In terms of assembly, homohexamer. Forms an RuvA(8)-RuvB(12)-Holliday junction (HJ) complex. HJ DNA is sandwiched between 2 RuvA tetramers; dsDNA enters through RuvA and exits via RuvB. An RuvB hexamer assembles on each DNA strand where it exits the tetramer. Each RuvB hexamer is contacted by two RuvA subunits (via domain III) on 2 adjacent RuvB subunits; this complex drives branch migration. In the full resolvosome a probable DNA-RuvA(4)-RuvB(12)-RuvC(2) complex forms which resolves the HJ.

The protein resides in the cytoplasm. The catalysed reaction is ATP + H2O = ADP + phosphate + H(+). Functionally, the RuvA-RuvB-RuvC complex processes Holliday junction (HJ) DNA during genetic recombination and DNA repair, while the RuvA-RuvB complex plays an important role in the rescue of blocked DNA replication forks via replication fork reversal (RFR). RuvA specifically binds to HJ cruciform DNA, conferring on it an open structure. The RuvB hexamer acts as an ATP-dependent pump, pulling dsDNA into and through the RuvAB complex. RuvB forms 2 homohexamers on either side of HJ DNA bound by 1 or 2 RuvA tetramers; 4 subunits per hexamer contact DNA at a time. Coordinated motions by a converter formed by DNA-disengaged RuvB subunits stimulates ATP hydrolysis and nucleotide exchange. Immobilization of the converter enables RuvB to convert the ATP-contained energy into a lever motion, pulling 2 nucleotides of DNA out of the RuvA tetramer per ATP hydrolyzed, thus driving DNA branch migration. The RuvB motors rotate together with the DNA substrate, which together with the progressing nucleotide cycle form the mechanistic basis for DNA recombination by continuous HJ branch migration. Branch migration allows RuvC to scan DNA until it finds its consensus sequence, where it cleaves and resolves cruciform DNA. The protein is Holliday junction branch migration complex subunit RuvB of Shewanella piezotolerans (strain WP3 / JCM 13877).